The following is a 1222-amino-acid chain: BOS complex subunit NOMO3 (1222 aa).

The signal sequence occupies residues 1–31 (MLVGQGAGPLGPAVVTAAVVLLLSGVGPAHG). Residues 32–1155 (SEDIVVGCGG…NPTRKLPEQD (1124 aa)) are Extracellular-facing. N-linked (GlcNAc...) asparagine glycans are attached at residues Asn-50, Asn-218, and Asn-618. A helical transmembrane segment spans residues 1156–1176 (IAQGSYIALPLTLLVLLAGYN). The Cytoplasmic segment spans residues 1177-1222 (HDKLIPLLLQLTSRLQGVGALGQAASDNSGPEDAKRQAKKQKTRRT). The interval 1198–1222 (GQAASDNSGPEDAKRQAKKQKTRRT) is disordered. The segment covering 1213–1222 (QAKKQKTRRT) has biased composition (basic residues).

Component of the back of Sec61 (BOS) complex, composed of NCLN/Nicalin, NOMO (NOMO1, NOMO2 or NOMO3) and TMEM147. The BOS complex is part of the multi-pass translocon (MPT) complex, composed of three subcomplexes, the GEL complex (composed of RAB5IF/OPTI and TMCO1), the BOS complex (composed of NCLN/Nicalin, NOMO and TMEM147) and the PAT complex (composed of WDR83OS/Asterix and CCDC47). The MPT complex associates with the SEC61 complex. Due to the strong similarity between NOMO1, NOMO2 and NOMO3, similar interaction pattern probably occur for the three gene copies.

It is found in the endoplasmic reticulum membrane. Functionally, component of the multi-pass translocon (MPT) complex that mediates insertion of multi-pass membrane proteins into the lipid bilayer of membranes. The MPT complex takes over after the SEC61 complex: following membrane insertion of the first few transmembrane segments of proteins by the SEC61 complex, the MPT complex occludes the lateral gate of the SEC61 complex to promote insertion of subsequent transmembrane regions. This chain is BOS complex subunit NOMO3 (NOMO3), found in Homo sapiens (Human).